The chain runs to 198 residues: Glycerol-3-phosphate acyltransferase (198 aa).

Helical transmembrane passes span 1-21 (MHIL…GFLF), 50-70 (WPAF…VKIA), 77-97 (NLFE…PIWL), 111-131 (MFIA…LIIL), 136-156 (IVSL…FLDI), and 157-177 (GSTN…VIWK).

It belongs to the PlsY family. In terms of assembly, probably interacts with PlsX.

It localises to the cell inner membrane. The catalysed reaction is an acyl phosphate + sn-glycerol 3-phosphate = a 1-acyl-sn-glycero-3-phosphate + phosphate. The protein operates within lipid metabolism; phospholipid metabolism. Functionally, catalyzes the transfer of an acyl group from acyl-phosphate (acyl-PO(4)) to glycerol-3-phosphate (G3P) to form lysophosphatidic acid (LPA). This enzyme utilizes acyl-phosphate as fatty acyl donor, but not acyl-CoA or acyl-ACP. The chain is Glycerol-3-phosphate acyltransferase from Prochlorococcus marinus subsp. pastoris (strain CCMP1986 / NIES-2087 / MED4).